The primary structure comprises 384 residues: uncharacterized protein (384 aa).

This is an uncharacterized protein from Nostoc sp. (strain PCC 7120 / SAG 25.82 / UTEX 2576).